The chain runs to 243 residues: Carboxy-S-adenosyl-L-methionine synthase (243 aa).

Residues Y40, 65 to 67 (GCS), 90 to 91 (DN), 118 to 119 (DI), N133, and R200 contribute to the S-adenosyl-L-methionine site.

Belongs to the class I-like SAM-binding methyltransferase superfamily. Cx-SAM synthase family. Homodimer.

It catalyses the reaction prephenate + S-adenosyl-L-methionine = carboxy-S-adenosyl-L-methionine + 3-phenylpyruvate + H2O. Its function is as follows. Catalyzes the conversion of S-adenosyl-L-methionine (SAM) to carboxy-S-adenosyl-L-methionine (Cx-SAM). The protein is Carboxy-S-adenosyl-L-methionine synthase of Shewanella loihica (strain ATCC BAA-1088 / PV-4).